Reading from the N-terminus, the 540-residue chain is Beta-secretase (540 aa).

An N-terminal signal peptide occupies residues methionine 1 to alanine 31. Positions tyrosine 81–alanine 435 constitute a Peptidase A1 domain. Catalysis depends on residues aspartate 99 and aspartate 302. Intrachain disulfides connect cysteine 222-cysteine 439, cysteine 291-cysteine 469, and cysteine 345-cysteine 397. The chain crosses the membrane as a helical span at residues isoleucine 483 to alanine 503. Residues leucine 504–proline 540 lie on the Cytoplasmic side of the membrane.

It belongs to the peptidase A1 family.

It localises to the membrane. The protein is Beta-secretase of Strongylocentrotus purpuratus (Purple sea urchin).